Here is a 692-residue protein sequence, read N- to C-terminus: Elongation factor G (692 aa).

The 275-residue stretch at 8–282 folds into the tr-type G domain; it reads AKTRNIGIMA…AVIAYLPSPL (275 aa). Residues 17–24, 81–85, and 135–138 contribute to the GTP site; these read AHVDAGKT, DTPGH, and NKMD.

Belongs to the TRAFAC class translation factor GTPase superfamily. Classic translation factor GTPase family. EF-G/EF-2 subfamily.

Its subcellular location is the cytoplasm. Its function is as follows. Catalyzes the GTP-dependent ribosomal translocation step during translation elongation. During this step, the ribosome changes from the pre-translocational (PRE) to the post-translocational (POST) state as the newly formed A-site-bound peptidyl-tRNA and P-site-bound deacylated tRNA move to the P and E sites, respectively. Catalyzes the coordinated movement of the two tRNA molecules, the mRNA and conformational changes in the ribosome. The polypeptide is Elongation factor G (fus) (Streptococcus pyogenes serotype M1).